The chain runs to 361 residues: tRNA-specific 2-thiouridylase MnmA (361 aa).

Residues A6–S13 and L32 each bind ATP. The active-site Nucleophile is the C101. An intrachain disulfide couples C101 to C194. Position 125 (G125) interacts with ATP. Residues K144–Q146 form an interaction with tRNA region. The active-site Cysteine persulfide intermediate is C194.

The protein belongs to the MnmA/TRMU family.

Its subcellular location is the cytoplasm. It catalyses the reaction S-sulfanyl-L-cysteinyl-[protein] + uridine(34) in tRNA + AH2 + ATP = 2-thiouridine(34) in tRNA + L-cysteinyl-[protein] + A + AMP + diphosphate + H(+). Its function is as follows. Catalyzes the 2-thiolation of uridine at the wobble position (U34) of tRNA, leading to the formation of s(2)U34. The polypeptide is tRNA-specific 2-thiouridylase MnmA (Corynebacterium aurimucosum (strain ATCC 700975 / DSM 44827 / CIP 107346 / CN-1) (Corynebacterium nigricans)).